Reading from the N-terminus, the 374-residue chain is MAKRDYYEVLGVAKNATDDELKKAYRKLAMKHHPDRNPDNKDAEEKFKEIKEAYEVLGDEQKRAAYDRYGHAGVDPNAAGMGGAGMGGGFADAFGDIFGEIFGGAGGRRGGAQVYRGADLKYALEITLEQAAHGFDTEIRVPSWEHCDTCHGSGAKPGTSPKTCRTCGGSGAVRMQQGFFSVQQTCPTCHGTGKEITDPCPSCDGVGRIRRNKTLQVKIPAGIDDGMRIRSSGNGEPGINGGPSGDLYVEIHIKPHKIFQRDGDDLHCELTIPFTTAALGGELQVPTLGGKAEISIPEGTQSGKTFRLRGKGIRGVRASYPGDLYCHVAVETPVRLSDEQKAILRQFETSLNDGGDRHSPQSKSWTDRVKEFFS.

The J domain maps to 5–70 (DYYEVLGVAK…QKRAAYDRYG (66 aa)). The CR-type zinc-finger motif lies at 134 to 212 (GFDTEIRVPS…CDGVGRIRRN (79 aa)). Positions 147, 150, 164, 167, 186, 189, 200, and 203 each coordinate Zn(2+). CXXCXGXG motif repeat units follow at residues 147–154 (CDTCHGSG), 164–171 (CRTCGGSG), 186–193 (CPTCHGTG), and 200–207 (CPSCDGVG).

It belongs to the DnaJ family. As to quaternary structure, homodimer. Zn(2+) is required as a cofactor.

It localises to the cytoplasm. Its function is as follows. Participates actively in the response to hyperosmotic and heat shock by preventing the aggregation of stress-denatured proteins and by disaggregating proteins, also in an autonomous, DnaK-independent fashion. Unfolded proteins bind initially to DnaJ; upon interaction with the DnaJ-bound protein, DnaK hydrolyzes its bound ATP, resulting in the formation of a stable complex. GrpE releases ADP from DnaK; ATP binding to DnaK triggers the release of the substrate protein, thus completing the reaction cycle. Several rounds of ATP-dependent interactions between DnaJ, DnaK and GrpE are required for fully efficient folding. Also involved, together with DnaK and GrpE, in the DNA replication of plasmids through activation of initiation proteins. This is Chaperone protein DnaJ from Bordetella petrii (strain ATCC BAA-461 / DSM 12804 / CCUG 43448).